The chain runs to 887 residues: Alanine--tRNA ligase (887 aa).

The Zn(2+) site is built by H579, H583, C681, and H685.

It belongs to the class-II aminoacyl-tRNA synthetase family. Requires Zn(2+) as cofactor.

Its subcellular location is the cytoplasm. It catalyses the reaction tRNA(Ala) + L-alanine + ATP = L-alanyl-tRNA(Ala) + AMP + diphosphate. In terms of biological role, catalyzes the attachment of alanine to tRNA(Ala) in a two-step reaction: alanine is first activated by ATP to form Ala-AMP and then transferred to the acceptor end of tRNA(Ala). Also edits incorrectly charged Ser-tRNA(Ala) and Gly-tRNA(Ala) via its editing domain. This chain is Alanine--tRNA ligase, found in Flavobacterium psychrophilum (strain ATCC 49511 / DSM 21280 / CIP 103535 / JIP02/86).